Consider the following 386-residue polypeptide: FHA domain-containing protein At4g14490 (386 aa).

The FHA domain occupies 28 to 78; the sequence is IRVGRIVRGNEIAIKDAGISTKHLRIESDSGNWVIQDLGSSNGTLLNSNAL. Positions 286 to 311 are disordered; it reads KNKGKNKKADQKPLKSFENDEVTDSG. Over residues 292–303 the composition is skewed to basic and acidic residues; that stretch reads KKADQKPLKSFE.

This is FHA domain-containing protein At4g14490 from Arabidopsis thaliana (Mouse-ear cress).